Reading from the N-terminus, the 270-residue chain is Dermonecrotic toxin LsaSicTox-alphaIB1av (270 aa).

H2 is a catalytic residue. The Mg(2+) site is built by E22 and D24. H38 acts as the Nucleophile in catalysis. Intrachain disulfides connect C42–C48 and C44–C187. D82 serves as a coordination point for Mg(2+).

Belongs to the arthropod phospholipase D family. Class II subfamily. Mg(2+) is required as a cofactor. Expressed by the venom gland.

It localises to the secreted. The catalysed reaction is an N-(acyl)-sphingosylphosphocholine = an N-(acyl)-sphingosyl-1,3-cyclic phosphate + choline. It catalyses the reaction an N-(acyl)-sphingosylphosphoethanolamine = an N-(acyl)-sphingosyl-1,3-cyclic phosphate + ethanolamine. The enzyme catalyses a 1-acyl-sn-glycero-3-phosphocholine = a 1-acyl-sn-glycero-2,3-cyclic phosphate + choline. It carries out the reaction a 1-acyl-sn-glycero-3-phosphoethanolamine = a 1-acyl-sn-glycero-2,3-cyclic phosphate + ethanolamine. Dermonecrotic toxins cleave the phosphodiester linkage between the phosphate and headgroup of certain phospholipids (sphingolipid and lysolipid substrates), forming an alcohol (often choline) and a cyclic phosphate. This toxin acts on sphingomyelin (SM). It may also act on ceramide phosphoethanolamine (CPE), lysophosphatidylcholine (LPC) and lysophosphatidylethanolamine (LPE), but not on lysophosphatidylserine (LPS), and lysophosphatidylglycerol (LPG). It acts by transphosphatidylation, releasing exclusively cyclic phosphate products as second products. Induces dermonecrosis, hemolysis, increased vascular permeability, edema, inflammatory response, and platelet aggregation. The polypeptide is Dermonecrotic toxin LsaSicTox-alphaIB1av (Loxosceles sabina (Tucson recluse spider)).